The following is a 79-amino-acid chain: Small proline-rich protein 4 (79 aa).

The span at 1–26 shows a compositional bias: low complexity; it reads MSSQQQQRQQQQCPPQRAQQQQVKQP. Positions 1 to 79 are disordered; that stretch reads MSSQQQQRQQ…AQQASKSKQK (79 aa). The segment covering 66 to 79 has biased composition (polar residues); it reads KCPSAQQASKSKQK.

Belongs to the cornifin (SPRR) family. Post-translationally, cross-linked to membrane proteins by transglutaminase.

Its subcellular location is the cytoplasm. It is found in the cell cortex. In terms of biological role, cross-linked envelope protein of keratinocytes. Involved in UV-induced cornification. This is Small proline-rich protein 4 (SPRR4) from Homo sapiens (Human).